Here is a 181-residue protein sequence, read N- to C-terminus: Large ribosomal subunit protein uL5 (181 aa).

This sequence belongs to the universal ribosomal protein uL5 family. As to quaternary structure, part of the 50S ribosomal subunit; contacts the 5S rRNA and probably tRNA. Forms a bridge to the 30S subunit in the 70S ribosome.

This is one of the proteins that bind and probably mediate the attachment of the 5S RNA into the large ribosomal subunit, where it forms part of the central protuberance. In the 70S ribosome it contacts protein S13 of the 30S subunit (bridge B1b), connecting the 2 subunits; this bridge is implicated in subunit movement. May contact the P site tRNA; the 5S rRNA and some of its associated proteins might help stabilize positioning of ribosome-bound tRNAs. This is Large ribosomal subunit protein uL5 from Methanococcus vannielii.